We begin with the raw amino-acid sequence, 343 residues long: 3-dehydroquinate synthase (343 aa).

NAD(+) contacts are provided by residues serine 61–lysine 66, glycine 95–valine 96, threonine 119–threonine 120, lysine 132, lysine 141, asparagine 142, and phenylalanine 159–threonine 162. Residues glutamate 174, histidine 231, and histidine 248 each coordinate Zn(2+).

This sequence belongs to the sugar phosphate cyclases superfamily. Dehydroquinate synthase family. In terms of assembly, homodimer. Requires NAD(+) as cofactor. The cofactor is Co(2+). Zn(2+) serves as cofactor.

The protein localises to the cytoplasm. It carries out the reaction 7-phospho-2-dehydro-3-deoxy-D-arabino-heptonate = 3-dehydroquinate + phosphate. It participates in metabolic intermediate biosynthesis; chorismate biosynthesis; chorismate from D-erythrose 4-phosphate and phosphoenolpyruvate: step 2/7. Catalyzes the conversion of 3-deoxy-D-arabino-heptulosonate 7-phosphate (DAHP) to dehydroquinate (DHQ). The chain is 3-dehydroquinate synthase from Helicobacter pylori (strain ATCC 700392 / 26695) (Campylobacter pylori).